A 146-amino-acid chain; its full sequence is uncharacterized protein (146 aa).

This is an uncharacterized protein from Thermoproteus tenax virus 1 (strain KRA1) (TTV1).